Reading from the N-terminus, the 492-residue chain is Cytochrome P450 monooxygenase ATEG_03631 (492 aa).

A helical membrane pass occupies residues 10-30 (FATLNPMVVVAIPVFLFVISL). The N-linked (GlcNAc...) asparagine glycan is linked to asparagine 309. Residue cysteine 457 coordinates heme.

It belongs to the cytochrome P450 family. It depends on heme as a cofactor.

Its subcellular location is the membrane. It functions in the pathway secondary metabolite biosynthesis. Cytochrome P450 monooxygenase; part of the cluster A that mediates the biosynthesis of azasperpyranones, members of the azaphilone family that exhibit anti-cancer activities. Azasperpyranones are synthesized by 2 clusters, A and B. Cluster A is responsible for the production of the polyhydric phenol moiety while the azaphilonoid scaffold is produced by the cluster B. The non-reducing polyketide synthase ATEG_03629 produces 5-methyl orsellinic acid, which is then reduced to 5-methyl orsellinic aldehyde by the NRPS-like protein ATEG_03630. 5-methyl orsellinic aldehyde is then first hydroxylated by the FAD-dependent monooxygenase ATEG_03635 and subsequently hydroxylated by the cytochrome P450 monooxygenase ATEG_03631 to produce the unstable polyhydric phenol precursor of azasperpyranones. On the other hand, the polyketide synthase ATEG_07659 is responsible for producing the 3,5-dimethyloctadienone moiety from acetyl-CoA, three malonyl-CoA, and two S-adenosyl methionines (SAM). The 3,5-dimethyloctadienone moiety is then loaded onto the SAT domain of ATEG_07661 and extended with four malonyl-CoA and one SAM, which leads to the formation of 2,4-dihydroxy-6-(5,7-dimethyl-2-oxo-trans-3-trans-5-nonadienyl)-3-methylbenzaldehyde (compound 8) after reductive release and aldol condensation. The FAD-dependent monooxygenase ATEG_07662 is the next enzyme in the biosynthesis sequence and hydroxylates the side chain at the benzylic position of compound 8. In Aspergillus nidulans, afoF, the ortholog of the FAD-dependent oxygenase ATEG_07660, is the key enzyme for the biosynthesis of asperfuranone by catalyzing the hydroxylation at C-8 of to prevent the formation of a six-membered ring hemiacetal intermediate and thus facilitating the formation of a five-membered ring to produce asperfuranone. In Aspergillus terreus, ATEG_07660 is probably not functional, which leads to the formation of the six-membered ring hemiacetal intermediate presperpyranone instead of asperfuranone. Finally, ATEG_03636 is involved in the condensation of the polyhydric phenol moiety produced by cluster A and the perasperpyranone precursor produced by cluster B, to yield azasperpyranone A. Further modifications of azasperpyranone A result in the production of derivatives, including azasperpyranone B to F. The polypeptide is Cytochrome P450 monooxygenase ATEG_03631 (Aspergillus terreus (strain NIH 2624 / FGSC A1156)).